Here is a 312-residue protein sequence, read N- to C-terminus: Glyoxylate/hydroxypyruvate reductase A (312 aa).

Arg-227 is an active-site residue. Residue His-275 is the Proton donor of the active site.

The protein belongs to the D-isomer specific 2-hydroxyacid dehydrogenase family. GhrA subfamily.

It localises to the cytoplasm. The catalysed reaction is glycolate + NADP(+) = glyoxylate + NADPH + H(+). It catalyses the reaction (R)-glycerate + NAD(+) = 3-hydroxypyruvate + NADH + H(+). The enzyme catalyses (R)-glycerate + NADP(+) = 3-hydroxypyruvate + NADPH + H(+). Catalyzes the NADPH-dependent reduction of glyoxylate and hydroxypyruvate into glycolate and glycerate, respectively. This is Glyoxylate/hydroxypyruvate reductase A from Klebsiella pneumoniae subsp. pneumoniae (strain ATCC 700721 / MGH 78578).